Reading from the N-terminus, the 338-residue chain is Anthranilate phosphoribosyltransferase (338 aa).

Residues Gly78, 81–82 (GD), Thr86, 88–91 (NIST), 106–114 (KHGNRSVSS), and Ser118 each bind 5-phospho-alpha-D-ribose 1-diphosphate. Gly78 contacts anthranilate. Ser90 lines the Mg(2+) pocket. Asn109 provides a ligand contact to anthranilate. Position 164 (Arg164) interacts with anthranilate. Mg(2+) is bound by residues Asp223 and Glu224.

It belongs to the anthranilate phosphoribosyltransferase family. As to quaternary structure, homodimer. Mg(2+) is required as a cofactor.

The enzyme catalyses N-(5-phospho-beta-D-ribosyl)anthranilate + diphosphate = 5-phospho-alpha-D-ribose 1-diphosphate + anthranilate. Its pathway is amino-acid biosynthesis; L-tryptophan biosynthesis; L-tryptophan from chorismate: step 2/5. Functionally, catalyzes the transfer of the phosphoribosyl group of 5-phosphorylribose-1-pyrophosphate (PRPP) to anthranilate to yield N-(5'-phosphoribosyl)-anthranilate (PRA). This Bacillus licheniformis (strain ATCC 14580 / DSM 13 / JCM 2505 / CCUG 7422 / NBRC 12200 / NCIMB 9375 / NCTC 10341 / NRRL NRS-1264 / Gibson 46) protein is Anthranilate phosphoribosyltransferase.